The following is a 463-amino-acid chain: uncharacterized protein (463 aa).

The first 23 residues, 1–23, serve as a signal peptide directing secretion; that stretch reads MKFSSIPIASTLLSLLVASSVTA. Disordered regions lie at residues 174–200 and 239–258; these read STYN…TKAS and GAST…QRKN.

Belongs to the but2 family.

Its subcellular location is the cytoplasm. This is an uncharacterized protein from Schizosaccharomyces pombe (strain 972 / ATCC 24843) (Fission yeast).